The sequence spans 321 residues: Biotin synthase (321 aa).

Residues 37 to 264 (RDMELCTLSS…TSVIRLSAGR (228 aa)) form the Radical SAM core domain. Positions 52, 56, and 59 each coordinate [4Fe-4S] cluster. 4 residues coordinate [2Fe-2S] cluster: Cys-96, Cys-127, Cys-187, and Arg-259.

The protein belongs to the radical SAM superfamily. Biotin synthase family. Homodimer. Requires [4Fe-4S] cluster as cofactor. [2Fe-2S] cluster serves as cofactor.

The enzyme catalyses (4R,5S)-dethiobiotin + (sulfur carrier)-SH + 2 reduced [2Fe-2S]-[ferredoxin] + 2 S-adenosyl-L-methionine = (sulfur carrier)-H + biotin + 2 5'-deoxyadenosine + 2 L-methionine + 2 oxidized [2Fe-2S]-[ferredoxin]. It functions in the pathway cofactor biosynthesis; biotin biosynthesis; biotin from 7,8-diaminononanoate: step 2/2. Its function is as follows. Catalyzes the conversion of dethiobiotin (DTB) to biotin by the insertion of a sulfur atom into dethiobiotin via a radical-based mechanism. The chain is Biotin synthase from Coxiella burnetii (strain CbuK_Q154) (Coxiella burnetii (strain Q154)).